Here is a 417-residue protein sequence, read N- to C-terminus: Serine hydroxymethyltransferase (417 aa).

(6S)-5,6,7,8-tetrahydrofolate-binding positions include L121 and 125 to 127; that span reads GHL. K229 carries the post-translational modification N6-(pyridoxal phosphate)lysine. 355-357 is a (6S)-5,6,7,8-tetrahydrofolate binding site; sequence SPF.

The protein belongs to the SHMT family. As to quaternary structure, homodimer. Requires pyridoxal 5'-phosphate as cofactor.

The protein localises to the cytoplasm. The enzyme catalyses (6R)-5,10-methylene-5,6,7,8-tetrahydrofolate + glycine + H2O = (6S)-5,6,7,8-tetrahydrofolate + L-serine. Its pathway is one-carbon metabolism; tetrahydrofolate interconversion. The protein operates within amino-acid biosynthesis; glycine biosynthesis; glycine from L-serine: step 1/1. In terms of biological role, catalyzes the reversible interconversion of serine and glycine with tetrahydrofolate (THF) serving as the one-carbon carrier. This reaction serves as the major source of one-carbon groups required for the biosynthesis of purines, thymidylate, methionine, and other important biomolecules. Also exhibits THF-independent aldolase activity toward beta-hydroxyamino acids, producing glycine and aldehydes, via a retro-aldol mechanism. The protein is Serine hydroxymethyltransferase of Shewanella sp. (strain W3-18-1).